The primary structure comprises 149 residues: Transcriptional repressor NrdR (149 aa).

Residues Cys3 to Cys34 fold into a zinc finger. One can recognise an ATP-cone domain in the interval Pro49–Asp139.

This sequence belongs to the NrdR family. Zn(2+) is required as a cofactor.

Its function is as follows. Negatively regulates transcription of bacterial ribonucleotide reductase nrd genes and operons by binding to NrdR-boxes. The sequence is that of Transcriptional repressor NrdR from Verminephrobacter eiseniae (strain EF01-2).